The following is a 387-amino-acid chain: EARP and GARP complex-interacting protein 1 (387 aa).

An N-acetylmethionine modification is found at Met-1. WD repeat units lie at residues 4 to 48, 55 to 101, 124 to 164, 172 to 214, 219 to 258, and 263 to 302; these read DAPV…IIDF, INKN…VWRM, ELLC…LWDL, VLAS…GWDT, QIYC…FWDT, and EPVK…LSNM. The tract at residues 310 to 335 is disordered; the sequence is FGHLVDDDDISDQEDHRSEEKSKEPL. Ser-320 is modified (phosphoserine). Positions 322–335 are enriched in basic and acidic residues; the sequence is QEDHRSEEKSKEPL. Residues 338–379 form a WD 7 repeat; the sequence is NVIATYEEHEDSVYAVDWSSADPWLFASLSYDGRLVINRVPR.

This sequence belongs to the WD repeat EIPR1 family. As to quaternary structure, interacts with two multisubunit tethering complexes: EARP composed of VPS50, VPS51, VPS52 and VPS53 subunits and GARP complex composed of VPS51, VPS52, VPS53 and VPS54 subunits. Interacts with SNAP29.

The protein localises to the golgi apparatus. It localises to the trans-Golgi network. Acts as a component of endosomal retrieval machinery that is involved in protein transport from early endosomes to either recycling endosomes or the trans-Golgi network. Mediates the recruitment of Golgi-associated retrograde protein (GARP) complex to the trans-Golgi network and controls early endosome-to-Golgi transport of internalized protein. Promotes the recycling of internalized transferrin receptor (TFRC) to the plasma membrane through interaction with endosome-associated recycling protein (EARP) complex. Controls proper insulin distribution and secretion, and retention of cargo in mature dense core vesicles. Required for the stability of the endosome-associated retrograde protein (EARP) complex subunits and for proper localization and association of EARP with membranes. The protein is EARP and GARP complex-interacting protein 1 of Homo sapiens (Human).